The chain runs to 173 residues: N-alpha-acetyltransferase 20 (173 aa).

The region spanning 2-151 is the N-acetyltransferase domain; sequence TTIRRFVCDD…DALDMRKALP (150 aa).

Belongs to the acetyltransferase family. ARD1 subfamily.

In terms of biological role, seems to be involved in N-acetylation. The polypeptide is N-alpha-acetyltransferase 20 (nat5) (Dictyostelium discoideum (Social amoeba)).